Here is a 122-residue protein sequence, read N- to C-terminus: Pupal cuticle protein Edg-78E (122 aa).

Positions 1-16 (MYKYLFCLALIGCACA) are cleaved as a signal peptide. The region spanning 36–96 (EGNYQYAYET…PVGDHLPTPP (61 aa)) is the Chitin-binding type R&amp;R domain.

As to expression, imaginal (anterior) epidermis.

Functionally, component of the cuticle of the pupa of fruit fly. The sequence is that of Pupal cuticle protein Edg-78E (Edg78E) from Drosophila melanogaster (Fruit fly).